The sequence spans 256 residues: Transmembrane protein 74B (256 aa).

The disordered stretch occupies residues 1–111 (MPPAQGYEFA…LSLHSEEGPA (111 aa)). Positions 80–96 (RLGSSPSPPGGVSSLPR) are enriched in low complexity. Basic and acidic residues predominate over residues 97–108 (SQRDDLSLHSEE). Helical transmembrane passes span 123–143 (FVSA…AYAI) and 177–197 (IIAG…LLMV).

The protein belongs to the TMEM74 family.

The protein resides in the membrane. The protein is Transmembrane protein 74B (TMEM74B) of Homo sapiens (Human).